The chain runs to 306 residues: Ribosomal protein L11 methyltransferase (306 aa).

S-adenosyl-L-methionine-binding residues include threonine 154, glycine 179, aspartate 201, and asparagine 242.

It belongs to the methyltransferase superfamily. PrmA family.

The protein resides in the cytoplasm. It carries out the reaction L-lysyl-[protein] + 3 S-adenosyl-L-methionine = N(6),N(6),N(6)-trimethyl-L-lysyl-[protein] + 3 S-adenosyl-L-homocysteine + 3 H(+). In terms of biological role, methylates ribosomal protein L11. This is Ribosomal protein L11 methyltransferase from Xanthomonas euvesicatoria pv. vesicatoria (strain 85-10) (Xanthomonas campestris pv. vesicatoria).